The sequence spans 252 residues: Phosphate import ATP-binding protein PstB (252 aa).

Positions 6–247 constitute an ABC transporter domain; that stretch reads ITIEKLNLYY…PKDERTEKYI (242 aa). 38–45 provides a ligand contact to ATP; the sequence is GPSGCGKS.

Belongs to the ABC transporter superfamily. Phosphate importer (TC 3.A.1.7) family. As to quaternary structure, the complex is composed of two ATP-binding proteins (PstB), two transmembrane proteins (PstC and PstA) and a solute-binding protein (PstS).

It is found in the cell membrane. It carries out the reaction phosphate(out) + ATP + H2O = ADP + 2 phosphate(in) + H(+). Functionally, part of the ABC transporter complex PstSACB involved in phosphate import. Responsible for energy coupling to the transport system. The chain is Phosphate import ATP-binding protein PstB from Lactobacillus delbrueckii subsp. bulgaricus (strain ATCC 11842 / DSM 20081 / BCRC 10696 / JCM 1002 / NBRC 13953 / NCIMB 11778 / NCTC 12712 / WDCM 00102 / Lb 14).